Here is a 510-residue protein sequence, read N- to C-terminus: MEMLNAIILILFPIIGFVLIFSFPTKTLKAKTASPSNPTSYQLIGSILSFNKNRHRLLQWYTDLLRLSPSQTITVDLLFGRRTIITANPENVEHILKTNFYNFPKGKPFTDLLGDLLGGGIFNSDGELWSSQRKLASHEFTMRSLREFTFEILREEVQNRLIPVLSSAVDCGETVDFQEVLKRFAFDVVCKVSLGWDPDCLDLTRPVPELVKAFDVAAEISARRATEPVYAVWKVKRFLNVGSEKRLREAIKTVHLSVSEIIRAKKKSLDIGGDVSDKQDLLSRFLAAGHGEEAVRDSVISFIMAGRDTTSAAMTWLFWLLSQNDDVETKILDELRNKGSLGLGFEDLREMSYTKACLCEAMRLYPPVAWDSKHAANDDILPDGTPLKKGDKVTYFPYGMGRMEKVWGKDWDEFKPNRWFEEEPSYGTKPVLKSVSSFKFPVFQAGPRVCIGKEMAFTQMKYVVGSVLSRFKIIPVCNNRPVFVPLLTAHMAGGLKVKIKRREQCDSMYI.

Residues methionine 3–phenylalanine 23 form a helical membrane-spanning segment. Heme is bound at residue cysteine 450.

It belongs to the cytochrome P450 family. Heme serves as cofactor.

The protein localises to the membrane. The enzyme catalyses a jasmonyl-L-amino acid + reduced [NADPH--hemoprotein reductase] + O2 = a 12-hydroxyjasmonyl-L-alpha-amino acid + oxidized [NADPH--hemoprotein reductase] + H2O + H(+). In terms of biological role, hydroxylase involved in the oxidation of the plant hormone jasmonoyl-L-isoleucine (JA-Ile), a bioactive phytohormone of the jasmonate-mediated signaling pathway. Converts JA-Ile to 12-hydroxy-JA-Ile. In Arabidopsis thaliana (Mouse-ear cress), this protein is Cytochrome P450 94B1.